The primary structure comprises 301 residues: Troponin T, cardiac muscle (301 aa).

Residues 1–72 show a composition bias toward acidic residues; it reads MSDAEEVVEE…EAKDAEEGPV (72 aa). Disordered stretches follow at residues 1 to 97 and 125 to 224; these read MSDA…DGER and NRKK…KKKI. Serine 2 is modified (N-acetylserine). Phosphoserine; by CK2 is present on serine 2. Basic and acidic residues-rich tracts occupy residues 125–186 and 206–224; these read NRKK…DEAR and QTER…KKKI. Threonine 207 is modified (phosphothreonine; by PKC/PRKCA). Phosphoserine; by PKC/PRKCA is present on serine 211. Phosphothreonine; by PKC/PRKCA and RAF1 is present on threonine 216. Threonine 297 carries the phosphothreonine; by PKC/PRKCA modification.

The protein belongs to the troponin T family. In terms of processing, phosphorylation at Thr-216 by PRKCA induces significant reduction in myofilament calcium sensitivity and actomyosin ATPase activity.

Its function is as follows. Troponin T is the tropomyosin-binding subunit of troponin, the thin filament regulatory complex which confers calcium-sensitivity to striated muscle actomyosin ATPase activity. This Mus musculus (Mouse) protein is Troponin T, cardiac muscle (Tnnt2).